The primary structure comprises 1099 residues: Zinc finger protein basonuclin-2 (1099 aa).

Positions E45–R66 are disordered. The span at V49 to R66 shows a compositional bias: basic and acidic residues. K277 is covalently cross-linked (Glycyl lysine isopeptide (Lys-Gly) (interchain with G-Cter in SUMO2)). The tract at residues L357–N385 is disordered. Residues N361–S372 are compositionally biased toward low complexity. A compositionally biased stretch (polar residues) spans P375–N385. Residues K396, K416, and K421 each participate in a glycyl lysine isopeptide (Lys-Gly) (interchain with G-Cter in SUMO2) cross-link. The tract at residues T397–S423 is disordered. The C2H2-type 1 zinc-finger motif lies at V441–H464. The residue at position 561 (S561) is a Phosphoserine. Disordered regions lie at residues E622–K641 and D648–E742. Residue K641 forms a Glycyl lysine isopeptide (Lys-Gly) (interchain with G-Cter in SUMO2) linkage. Positions D648–N661 are enriched in acidic residues. 2 stretches are compositionally biased toward basic and acidic residues: residues M670–E680 and E719–E742. Residues K833–H856 form a C2H2-type 2 zinc finger. Glycyl lysine isopeptide (Lys-Gly) (interchain with G-Cter in SUMO2) cross-links involve residues K894 and K919. Disordered regions lie at residues L929–G948 and L968–A1008. Over residues A982–G995 the composition is skewed to acidic residues. 2 C2H2-type zinc fingers span residues I1035–H1058 and H1063–H1090. A disordered region spans residues S1079–D1099.

As to expression, highly expressed in testis, uterus and small intestine, and weakly expressed in colon and prostate. Also expressed in skin, primary keratinocytes, immortalized keratinocytes, and HeLa and HEK293 cells. Not detected in blood, thymus, spleen or Hep-G2 cells.

It localises to the nucleus. Probable transcription factor specific for skin keratinocytes. May play a role in the differentiation of spermatozoa and oocytes. May also play an important role in early urinary-tract development. In Homo sapiens (Human), this protein is Zinc finger protein basonuclin-2.